Reading from the N-terminus, the 131-residue chain is L-ectoine synthase (131 aa).

Belongs to the ectoine synthase family.

It carries out the reaction (2S)-4-acetamido-2-aminobutanoate = L-ectoine + H2O. The protein operates within amine and polyamine biosynthesis; ectoine biosynthesis; L-ectoine from L-aspartate 4-semialdehyde: step 3/3. Functionally, catalyzes the circularization of gamma-N-acetyl-alpha,gamma-diaminobutyric acid (ADABA) to ectoine (1,4,5,6-tetrahydro-2-methyl-4-pyrimidine carboxylic acid), which is an excellent osmoprotectant. The chain is L-ectoine synthase from Bordetella bronchiseptica (strain ATCC BAA-588 / NCTC 13252 / RB50) (Alcaligenes bronchisepticus).